A 311-amino-acid polypeptide reads, in one-letter code: Acetyl-coenzyme A carboxylase carboxyl transferase subunit alpha (311 aa).

One can recognise a CoA carboxyltransferase C-terminal domain in the interval 36–286 (NLEKEVAKVY…ASYFVSKLEK (251 aa)).

It belongs to the AccA family. In terms of assembly, acetyl-CoA carboxylase is a heterohexamer composed of biotin carboxyl carrier protein (AccB), biotin carboxylase (AccC) and two subunits each of ACCase subunit alpha (AccA) and ACCase subunit beta (AccD).

The protein resides in the cytoplasm. It carries out the reaction N(6)-carboxybiotinyl-L-lysyl-[protein] + acetyl-CoA = N(6)-biotinyl-L-lysyl-[protein] + malonyl-CoA. Its pathway is lipid metabolism; malonyl-CoA biosynthesis; malonyl-CoA from acetyl-CoA: step 1/1. Component of the acetyl coenzyme A carboxylase (ACC) complex. First, biotin carboxylase catalyzes the carboxylation of biotin on its carrier protein (BCCP) and then the CO(2) group is transferred by the carboxyltransferase to acetyl-CoA to form malonyl-CoA. The protein is Acetyl-coenzyme A carboxylase carboxyl transferase subunit alpha of Campylobacter curvus (strain 525.92).